The following is a 947-amino-acid chain: Nonribosomal peptide synthetase ucdA (947 aa).

The interval 25–413 is adenylation (A) domain; it reads YSPHANAGYC…AGPVVFKEYF (389 aa). In terms of domain architecture, Carrier spans 585 to 665; it reads APENEFERDL…DLGTALRKLQ (81 aa). An O-(pantetheine 4'-phosphoryl)serine modification is found at Ser623. The tract at residues 684 to 934 is thioesterase (TE) domain; it reads PLWLVHPGVG…MLSPEHVFDF (251 aa).

Belongs to the NRP synthetase family.

It carries out the reaction 2 3-(4-hydroxyphenyl)pyruvate + 2 ATP = atromentin + 2 AMP + 2 diphosphate + H(+). Its pathway is secondary metabolite biosynthesis. Nonribosomal peptide synthetase that mediates the biosynthesis of usterphenyllins and uscandidusins, p-terphenyl derivatives. Within the pathway, ucdA condenses two 4-hydroxyphenylpyruvate (HPPA) units to produce atromentin. UcdA first activates HPPA through its A domain to AMP-HPPA. The HPPA unit is then loaded to the T domain and eventually transferred to the TE domain. Another HPPA unit is then loaded onto the T domain. The TE domain then catalyzes the condensation of the two HPPA units and the release of atromentin via cyclization. The pathway begin with the biosynthesis of 4-hydroxyphenylpyruvate (HPPA) from L-tyrosine, possibly by the aminotransferase ucdG. The nonribosomal peptide synthetase ucdA then condenses two HPPA units to produce atromentin. The key step in this pathway is the reduction and dehydration of atromentin to form a terphenyl triol intermediate, performed by the NAD-dependent dehydrogenase ucdB. Further O-methylation by the methyltransferase ucdC forms terphenyllin carrying two methoxy moieties at C-9 and C-12, and subsequent dihydroxylation at C-3 of ring A and C-15 of ring C by the flavin-dependent oxygenase ucdD leads to 3,15-dihydroxyterphenyllin. Prenylation by ucdE at position C-5 of ring A forms usterphenyllin B, and is followed by a second prenylation at position C-14 of ring C to form usterphenyllin A. The following furan ring formation that leads to uscandidusins A and B was proven to be an unexpected spontaneous non-enzymatic reaction. In Aspergillus ustus, this protein is Nonribosomal peptide synthetase ucdA.